Reading from the N-terminus, the 294-residue chain is Bifunctional protein FolD (294 aa).

NADP(+) is bound by residues 169–171 (GRG), threonine 196, and valine 237.

Belongs to the tetrahydrofolate dehydrogenase/cyclohydrolase family. In terms of assembly, homodimer.

The enzyme catalyses (6R)-5,10-methylene-5,6,7,8-tetrahydrofolate + NADP(+) = (6R)-5,10-methenyltetrahydrofolate + NADPH. The catalysed reaction is (6R)-5,10-methenyltetrahydrofolate + H2O = (6R)-10-formyltetrahydrofolate + H(+). It participates in one-carbon metabolism; tetrahydrofolate interconversion. Its function is as follows. Catalyzes the oxidation of 5,10-methylenetetrahydrofolate to 5,10-methenyltetrahydrofolate and then the hydrolysis of 5,10-methenyltetrahydrofolate to 10-formyltetrahydrofolate. The chain is Bifunctional protein FolD from Renibacterium salmoninarum (strain ATCC 33209 / DSM 20767 / JCM 11484 / NBRC 15589 / NCIMB 2235).